The primary structure comprises 76 residues: DNA-directed RNA polymerase subunit epsilon (76 aa).

The protein belongs to the RNA polymerase subunit epsilon family. As to quaternary structure, RNAP is composed of a core of 2 alpha, a beta and a beta' subunit. The core is associated with a delta subunit, and at least one of epsilon or omega. When a sigma factor is associated with the core the holoenzyme is formed, which can initiate transcription.

The catalysed reaction is RNA(n) + a ribonucleoside 5'-triphosphate = RNA(n+1) + diphosphate. In terms of biological role, a non-essential component of RNA polymerase (RNAP). The polypeptide is DNA-directed RNA polymerase subunit epsilon (Streptococcus gordonii (strain Challis / ATCC 35105 / BCRC 15272 / CH1 / DL1 / V288)).